We begin with the raw amino-acid sequence, 463 residues long: MGRKKIQITRIMDERNRQVTFTKRKFGLMKKAYELSVLCDCEIALIIFNSTNKLFQYASTDMDKVLLKYTEYNEPHESRTNSDIVEALNKKENKGCESPDPDSSYALTPRTEEKYKKINEEFDNMIKSHKIPAVPPPNFEMPVSIPVSSHNSLVYSNPVSSLGNPNFLPLAHPSLQRNSMSPGVTHRPPSAGNTGGLMGGDLTSGAGTSAGNGYGNPRNSPGLLVSPGNLNKNMQAKSPPPMNLGMNNRKPDLRVLIPPGSKNTMPSVSQRINNSQSAQSLATPVVSVATPTLPGQGMGGYPSAISTTYGTEYSLSSADLSSLSGFNTASALHLGSVTGWQQQHLHNMPPSALSQLGACTSTHLSQSSNLSLPSTQSLNIKSEPVSPPRDRTTTPSRYPQHTRHEAGRSPVDSLSSCSSSYDGSDREDHRNEFHSPIGLTRPSPDERESPSVKRMRLSEGWAT.

In terms of domain architecture, MADS-box spans 3–57 (RKKIQITRIMDERNRQVTFTKRKFGLMKKAYELSVLCDCEIALIIFNSTNKLFQY). The residue at position 4 (Lys4) is an N6-acetyllysine. The mef2-type DNA-binding region spans 58-86 (ASTDMDKVLLKYTEYNEPHESRTNSDIVE). Ser59 bears the Phosphoserine; by CK2 mark. 2 positions are modified to phosphoserine: Ser98 and Ser104. N6-acetyllysine occurs at positions 114 and 117. Residues 178–223 (NSMSPGVTHRPPSAGNTGGLMGGDLTSGAGTSAGNGYGNPRNSPGL) are disordered. Residues Ser220 and Ser226 each carry the phosphoserine modification. An N6-acetyllysine mark is found at Lys232 and Lys237. Ser238 carries the post-translational modification Phosphoserine. Lys250 and Lys262 each carry N6-acetyllysine. Residues Thr283 and Thr290 each carry the phosphothreonine; by MAPK7 and MAPK14 modification. The tract at residues 358–389 (ACTSTHLSQSSNLSLPSTQSLNIKSEPVSPPR) is transcription repressor. The span at 365–380 (SQSSNLSLPSTQSLNI) shows a compositional bias: polar residues. Residues 365–463 (SQSSNLSLPS…RMRLSEGWAT (99 aa)) form a disordered region. Residue Lys381 forms a Glycyl lysine isopeptide (Lys-Gly) (interchain with G-Cter in SUMO) linkage. Ser386 is subject to Phosphoserine; by CDK5. Ser409 is subject to Phosphoserine; by MAPK7. Residues 409 to 422 (SPVDSLSSCSSSYD) are compositionally biased toward low complexity. Residues 423 to 433 (GSDREDHRNEF) show a composition bias toward basic and acidic residues. Ser435 is modified (phosphoserine).

Forms a complex with class II HDACs in undifferentiating cells. On myogenic differentiation, HDACs are released into the cytoplasm allowing MEF2s to interact with other proteins for activation. Interacts with EP300 in differentiating cells; the interaction acetylates MEF2C leading to increased DNA binding and activation. Interacts with HDAC7 and CARM1. Interacts with HDAC4, HDAC7 and HDAC9; the interaction with HDACs represses transcriptional activity. Interacts with LPIN1. Interacts with MYOCD. Interacts with AKAP13. Interacts with FOXK1; the interaction inhibits MEF2C transactivation activity. Interacts (via N-terminus) with HABP4; this interaction decreases DNA-binding activity of MEF2C in myocardial cells in response to mechanical stress. Interacts with JPH2; interaction specifically takes place with the Junctophilin-2 N-terminal fragment cleavage product of JPH2. Interacts (via MADS box) with SOX18. Interacts with PHF7; the interaction promotes MEF2C binding to its transcription targets. Post-translationally, phosphorylated on Ser-59; which enhances DNA binding activity. Phosphorylated on Ser-386; which is required for Lys-381 sumoylation and inhibits transcriptional activity. Acetylated by p300 on several sites in diffentiating myocytes. Acetylation on Lys-4 increases DNA binding and transactivation. In terms of processing, sumoylated on Lys-381 with SUMO2 but not SUMO1; which represses transcriptional activity. Post-translationally, proteolytically cleaved in cerebellar granule neurons on several sites by caspase 3 and caspase 7 following neurotoxicity. Preferentially cleaves the CDK5-mediated hyperphosphorylated form which leads to neuron apoptosis and transcriptional inactivation.

The protein localises to the nucleus. It localises to the cytoplasm. It is found in the sarcoplasm. Functionally, transcription activator which binds specifically to the MEF2 element present in the regulatory regions of many muscle-specific genes. Controls cardiac morphogenesis and myogenesis, and is also involved in vascular development. Enhances transcriptional activation mediated by SOX18. Plays an essential role in hippocampal-dependent learning and memory by suppressing the number of excitatory synapses and thus regulating basal and evoked synaptic transmission. Crucial for normal neuronal development, distribution, and electrical activity in the neocortex. Necessary for proper development of megakaryocytes and platelets and for bone marrow B-lymphopoiesis. Required for B-cell survival and proliferation in response to BCR stimulation, efficient IgG1 antibody responses to T-cell-dependent antigens and for normal induction of germinal center B-cells. May also be involved in neurogenesis and in the development of cortical architecture. In Sus scrofa (Pig), this protein is Myocyte-specific enhancer factor 2C.